A 601-amino-acid chain; its full sequence is Elongation factor 4 (601 aa).

A tr-type G domain is found at Gln6–Gln188. GTP contacts are provided by residues Asp18 to Thr23 and Asn135 to Asp138.

This sequence belongs to the TRAFAC class translation factor GTPase superfamily. Classic translation factor GTPase family. LepA subfamily.

Its subcellular location is the cell membrane. It carries out the reaction GTP + H2O = GDP + phosphate + H(+). Required for accurate and efficient protein synthesis under certain stress conditions. May act as a fidelity factor of the translation reaction, by catalyzing a one-codon backward translocation of tRNAs on improperly translocated ribosomes. Back-translocation proceeds from a post-translocation (POST) complex to a pre-translocation (PRE) complex, thus giving elongation factor G a second chance to translocate the tRNAs correctly. Binds to ribosomes in a GTP-dependent manner. The chain is Elongation factor 4 from Desulfitobacterium hafniense (strain DSM 10664 / DCB-2).